The chain runs to 726 residues: Catalase-peroxidase (726 aa).

The disordered stretch occupies residues 1–33 (MSTTDDTHNTLSTGKCPFHQGGHDRSAGAGTAS). Residues 105–226 (WHGAGTYRSI…LGATEMGLIY (122 aa)) constitute a cross-link (tryptophyl-tyrosyl-methioninium (Trp-Tyr) (with M-252)). His-106 (proton acceptor) is an active-site residue. The segment at residues 226–252 (YVNPEGPDHSGEPLSAAAAIRATFGNM) is a cross-link (tryptophyl-tyrosyl-methioninium (Tyr-Met) (with W-105)). His-267 lines the heme b pocket.

Belongs to the peroxidase family. Peroxidase/catalase subfamily. Homodimer or homotetramer. It depends on heme b as a cofactor. In terms of processing, formation of the three residue Trp-Tyr-Met cross-link is important for the catalase, but not the peroxidase activity of the enzyme.

The catalysed reaction is H2O2 + AH2 = A + 2 H2O. The enzyme catalyses 2 H2O2 = O2 + 2 H2O. Bifunctional enzyme with both catalase and broad-spectrum peroxidase activity. This Salmonella schwarzengrund (strain CVM19633) protein is Catalase-peroxidase.